A 664-amino-acid polypeptide reads, in one-letter code: Alkaline/neutral invertase C, mitochondrial (664 aa).

Ser41, Ser125, and Ser657 each carry phosphoserine.

It belongs to the glycosyl hydrolase 100 family. As to expression, expressed in seedlings, roots and flowers.

It localises to the mitochondrion. It catalyses the reaction Hydrolysis of terminal non-reducing beta-D-fructofuranoside residues in beta-D-fructofuranosides.. Its function is as follows. Mitochondrial invertase that cleaves sucrose into glucose and fructose and is involved in the regulation of aerial tissue development and floral transition. May be modulating hormone balance in relation to the radicle emergence. The protein is Alkaline/neutral invertase C, mitochondrial of Arabidopsis thaliana (Mouse-ear cress).